A 342-amino-acid polypeptide reads, in one-letter code: L-lysine 2,3-aminomutase (342 aa).

The Radical SAM core domain occupies 106–329; the sequence is HKYQNRALLL…PRLAREIGGE (224 aa). [4Fe-4S] cluster contacts are provided by Cys120, Cys124, and Cys127. At Lys332 the chain carries N6-(pyridoxal phosphate)lysine.

It belongs to the radical SAM superfamily. KamA family. [4Fe-4S] cluster serves as cofactor. The cofactor is pyridoxal 5'-phosphate.

The catalysed reaction is L-lysine = D-beta-lysine. With EpmA is involved in the beta-lysylation step of the post-translational modification of translation elongation factor P (EF-P) on 'Lys-34'. EpmB appears to act before EpmA. Displays lysine 2,3-aminomutase activity, producing (R)-beta-lysine from (S)-alpha-lysine (L-lysine). This Salmonella typhimurium (strain LT2 / SGSC1412 / ATCC 700720) protein is L-lysine 2,3-aminomutase (epmB).